The chain runs to 513 residues: Pleiotropic regulator 1 (513 aa).

N-acetylmethionine is present on M1. 2 positions are modified to phosphoserine: S119 and S200. WD repeat units follow at residues 201 to 240 (GHLG…LKLS), 243 to 282 (GHIS…VIRH), 285 to 324 (GHLS…SVHT), 327 to 366 (GHTN…TRVT), 369 to 409 (NHKK…QNLS), 410 to 448 (GHNA…NFQR), and 459 to 498 (DSES…TEET). S390 carries the post-translational modification Phosphoserine.

This sequence belongs to the WD repeat PRL1/PRL2 family. In terms of assembly, identified in the spliceosome C complex. Component of the PRP19-CDC5L splicing complex composed of a core complex comprising a homotetramer of PRPF19, CDC5L, PLRG1 and BCAS2, and at least three less stably associated proteins CTNNBL1, CWC15 and HSPA8. Interacts (via its WD40 repeat domain) directly with CDC5L (via its C-terminal); the interaction is required for mRNA splicing but not for spliceosome assembly. Component of the minor spliceosome, which splices U12-type introns. Within this complex, interacts with CRIPT. Also interacts directly in the complex with BCAS2 and PRPF19. Interacts with USB1.

Its subcellular location is the nucleus. The protein localises to the nucleus speckle. In terms of biological role, involved in pre-mRNA splicing as component of the spliceosome. Component of the PRP19-CDC5L complex that forms an integral part of the spliceosome and is required for activating pre-mRNA splicing. As a component of the minor spliceosome, involved in the splicing of U12-type introns in pre-mRNAs. The protein is Pleiotropic regulator 1 (PLRG1) of Bos taurus (Bovine).